The sequence spans 887 residues: Valine--tRNA ligase (887 aa).

Residues 47–57 carry the 'HIGH' region motif; the sequence is PNVTGALHMGH. Positions 527–531 match the 'KMSKS' region motif; it reads KMSKS. An ATP-binding site is contributed by lysine 530. Residues 817–885 adopt a coiled-coil conformation; it reads LVNVEEEEKR…LLASLEKIRK (69 aa).

Belongs to the class-I aminoacyl-tRNA synthetase family. ValS type 1 subfamily. In terms of assembly, monomer.

It localises to the cytoplasm. The catalysed reaction is tRNA(Val) + L-valine + ATP = L-valyl-tRNA(Val) + AMP + diphosphate. Catalyzes the attachment of valine to tRNA(Val). As ValRS can inadvertently accommodate and process structurally similar amino acids such as threonine, to avoid such errors, it has a 'posttransfer' editing activity that hydrolyzes mischarged Thr-tRNA(Val) in a tRNA-dependent manner. The protein is Valine--tRNA ligase of Geobacter sulfurreducens (strain ATCC 51573 / DSM 12127 / PCA).